Consider the following 80-residue polypeptide: Conotoxin Bu14 (80 aa).

An N-terminal signal peptide occupies residues 1–8 (AACQLGTA). Positions 9–40 (ASFARDKQDYPAVRSDGRQDSKDSTLDRIAKR) are excised as a propeptide. Cystine bridges form between Cys41/Cys55, Cys48/Cys59, and Cys54/Cys69.

It belongs to the conotoxin O1 superfamily. In terms of tissue distribution, expressed by the venom duct.

Its subcellular location is the secreted. The sequence is that of Conotoxin Bu14 from Conus bullatus (Bubble cone).